Here is a 292-residue protein sequence, read N- to C-terminus: Ribonuclease Z (292 aa).

Zn(2+) contacts are provided by His-60, His-62, Asp-64, His-65, His-132, Asp-200, and His-256. Asp-64 serves as the catalytic Proton acceptor.

Belongs to the RNase Z family. As to quaternary structure, homodimer. Requires Zn(2+) as cofactor.

It carries out the reaction Endonucleolytic cleavage of RNA, removing extra 3' nucleotides from tRNA precursor, generating 3' termini of tRNAs. A 3'-hydroxy group is left at the tRNA terminus and a 5'-phosphoryl group is left at the trailer molecule.. Functionally, zinc phosphodiesterase, which displays some tRNA 3'-processing endonuclease activity. Probably involved in tRNA maturation, by removing a 3'-trailer from precursor tRNA. The chain is Ribonuclease Z from Sulfolobus acidocaldarius (strain ATCC 33909 / DSM 639 / JCM 8929 / NBRC 15157 / NCIMB 11770).